The chain runs to 1755 residues: Transposon Ty1-JR2 Gag-Pol polyprotein (1755 aa).

Over residues 1–16 (MESQQLSQHSHISHGS) the composition is skewed to low complexity. 3 disordered regions span residues 1-93 (MESQ…MMTQ), 126-173 (PQSQ…RPPP), and 352-421 (GSRN…SKST). Polar residues-rich tracts occupy residues 48 to 60 (TKAN…TPAS), 71 to 93 (SPQT…MMTQ), and 127 to 152 (QSQF…GNTF). A compositionally biased stretch (low complexity) spans 153 to 165 (TDSSSADSDMTST). Residues 299–401 (NNGIHINNKV…NSKSKTARAH (103 aa)) form an RNA-binding region. The segment covering 402-418 (NVSTSNNSPSTDNDSIS) has biased composition (low complexity). Ser-416 is subject to Phosphoserine. Asp-461 functions as the For protease activity; shared with dimeric partner in the catalytic mechanism. The tract at residues 583-640 (NVHTSESTRKYPYPFIHRMLAHANAQTIRYSLKNNTITYFNESDVDWSSAIDYQCPDC) is integrase-type zinc finger-like. In terms of domain architecture, Integrase catalytic spans 660–835 (NSYEPFQYLH…AGLDISTLLP (176 aa)). Residues Asp-671 and Asp-736 each coordinate Mg(2+). Disordered stretches follow at residues 956–1087 (SKAV…ETEK), 1092–1111 (RSPS…NIVP), and 1130–1186 (DLPL…EDNE). The span at 960–969 (SPTDSTPPST) shows a compositional bias: low complexity. Positions 1005–1015 (STPQISNIEST) are enriched in polar residues. A compositionally biased stretch (basic and acidic residues) spans 1038 to 1053 (ESSHASKSKDFRHSDS). 2 stretches are compositionally biased toward polar residues: residues 1054-1082 (YSEN…QISD) and 1101-1111 (PENNSSHNIVP). The Bipartite nuclear localization signal motif lies at 1178–1212 (KKRSLEDNETEIKVSRDTWNTKNMRSLEPPRSKKR). The Reverse transcriptase Ty1/copia-type domain maps to 1338-1476 (NNYYITQLDI…DILGLEIKYQ (139 aa)). The Mg(2+) site is built by Asp-1346, Asp-1427, Asp-1428, Asp-1610, Glu-1652, and Asp-1685. Residues 1610–1752 (DASYGNQPYY…IKTFKLLTNK (143 aa)) form the RNase H Ty1/copia-type domain.

The capsid protein forms a homotrimer, from which the VLPs are assembled. The protease is a homodimer, whose active site consists of two apposed aspartic acid residues. Post-translationally, initially, virus-like particles (VLPs) are composed of the structural unprocessed proteins Gag and Gag-Pol, and also contain the host initiator methionine tRNA (tRNA(i)-Met) which serves as a primer for minus-strand DNA synthesis, and a dimer of genomic Ty RNA. Processing of the polyproteins occurs within the particle and proceeds by an ordered pathway, called maturation. First, the protease (PR) is released by autocatalytic cleavage of the Gag-Pol polyprotein yielding capsid protein p45 and a Pol-p154 precursor protein. This cleavage is a prerequisite for subsequent processing of Pol-p154 at the remaining sites to release the mature structural and catalytic proteins. Maturation takes place prior to the RT reaction and is required to produce transposition-competent VLPs.

The protein resides in the cytoplasm. Its subcellular location is the nucleus. The catalysed reaction is DNA(n) + a 2'-deoxyribonucleoside 5'-triphosphate = DNA(n+1) + diphosphate. The enzyme catalyses Endonucleolytic cleavage to 5'-phosphomonoester.. Capsid protein (CA) is the structural component of the virus-like particle (VLP), forming the shell that encapsulates the retrotransposons dimeric RNA genome. The particles are assembled from trimer-clustered units and there are holes in the capsid shells that allow for the diffusion of macromolecules. CA also has nucleocapsid-like chaperone activity, promoting primer tRNA(i)-Met annealing to the multipartite primer-binding site (PBS), dimerization of Ty1 RNA and initiation of reverse transcription. Its function is as follows. The aspartyl protease (PR) mediates the proteolytic cleavages of the Gag and Gag-Pol polyproteins after assembly of the VLP. Functionally, reverse transcriptase/ribonuclease H (RT) is a multifunctional enzyme that catalyzes the conversion of the retro-elements RNA genome into dsDNA within the VLP. The enzyme displays a DNA polymerase activity that can copy either DNA or RNA templates, and a ribonuclease H (RNase H) activity that cleaves the RNA strand of RNA-DNA heteroduplexes during plus-strand synthesis and hydrolyzes RNA primers. The conversion leads to a linear dsDNA copy of the retrotransposon that includes long terminal repeats (LTRs) at both ends. In terms of biological role, integrase (IN) targets the VLP to the nucleus, where a subparticle preintegration complex (PIC) containing at least integrase and the newly synthesized dsDNA copy of the retrotransposon must transit the nuclear membrane. Once in the nucleus, integrase performs the integration of the dsDNA into the host genome. The sequence is that of Transposon Ty1-JR2 Gag-Pol polyprotein (TY1B-JR2) from Saccharomyces cerevisiae (strain ATCC 204508 / S288c) (Baker's yeast).